The chain runs to 558 residues: CTP synthase (558 aa).

The interval 1–267 is amidoligase domain; it reads MTKFVFVTGG…AQQTLELLNL (267 aa). Ser-13 contributes to the CTP binding site. Ser-13 is a UTP binding site. Residues 14–19 and Asp-71 each bind ATP; that span reads SIGKGI. Residues Asp-71 and Glu-141 each coordinate Mg(2+). Residues 148–150, 188–193, and Lys-224 each bind CTP; these read DIE and KTKPTQ. UTP contacts are provided by residues 188 to 193 and Lys-224; that span reads KTKPTQ. The region spanning 292 to 534 is the Glutamine amidotransferase type-1 domain; that stretch reads EVALVGKYVQ…VKASVDYNHV (243 aa). Gly-354 lines the L-glutamine pocket. Cys-381 acts as the Nucleophile; for glutamine hydrolysis in catalysis. L-glutamine is bound by residues 382 to 385, Glu-405, and Arg-462; that span reads MGMQ. Catalysis depends on residues His-507 and Glu-509.

It belongs to the CTP synthase family. In terms of assembly, homotetramer.

It carries out the reaction UTP + L-glutamine + ATP + H2O = CTP + L-glutamate + ADP + phosphate + 2 H(+). The enzyme catalyses L-glutamine + H2O = L-glutamate + NH4(+). The catalysed reaction is UTP + NH4(+) + ATP = CTP + ADP + phosphate + 2 H(+). Its pathway is pyrimidine metabolism; CTP biosynthesis via de novo pathway; CTP from UDP: step 2/2. Allosterically activated by GTP, when glutamine is the substrate; GTP has no effect on the reaction when ammonia is the substrate. The allosteric effector GTP functions by stabilizing the protein conformation that binds the tetrahedral intermediate(s) formed during glutamine hydrolysis. Inhibited by the product CTP, via allosteric rather than competitive inhibition. Functionally, catalyzes the ATP-dependent amination of UTP to CTP with either L-glutamine or ammonia as the source of nitrogen. Regulates intracellular CTP levels through interactions with the four ribonucleotide triphosphates. The sequence is that of CTP synthase from Gloeothece citriformis (strain PCC 7424) (Cyanothece sp. (strain PCC 7424)).